Reading from the N-terminus, the 149-residue chain is SKP1-like protein 14 (149 aa).

Positions 91–149 (LLAANYLNIKGLLDLSAQTVADRIKDKTPEEIREIFNIENDFTPEEEAAVRKENAWAFE) are interaction with the F-box domain of F-box proteins.

Belongs to the SKP1 family. In terms of assembly, part of a SCF (SKP1-cullin-F-box) protein ligase complex. Interacts with CPR1/CPR30, At3g61590, At4g39550 and At5g49610. Restricted to inflorescences, pollen and leaves.

The protein resides in the nucleus. It functions in the pathway protein modification; protein ubiquitination. Functionally, involved in ubiquitination and subsequent proteasomal degradation of target proteins. Together with CUL1, RBX1 and a F-box protein, it forms a SCF E3 ubiquitin ligase complex. The functional specificity of this complex depends on the type of F-box protein. In the SCF complex, it serves as an adapter that links the F-box protein to CUL1. This Arabidopsis thaliana (Mouse-ear cress) protein is SKP1-like protein 14 (ASK14).